The chain runs to 202 residues: Probable nicotinate-nucleotide adenylyltransferase (202 aa).

This sequence belongs to the NadD family.

It catalyses the reaction nicotinate beta-D-ribonucleotide + ATP + H(+) = deamido-NAD(+) + diphosphate. It participates in cofactor biosynthesis; NAD(+) biosynthesis; deamido-NAD(+) from nicotinate D-ribonucleotide: step 1/1. In terms of biological role, catalyzes the reversible adenylation of nicotinate mononucleotide (NaMN) to nicotinic acid adenine dinucleotide (NaAD). The sequence is that of Probable nicotinate-nucleotide adenylyltransferase from Synechococcus sp. (strain JA-2-3B'a(2-13)) (Cyanobacteria bacterium Yellowstone B-Prime).